The sequence spans 99 residues: Large ribosomal subunit protein uL23 (99 aa).

Belongs to the universal ribosomal protein uL23 family. As to quaternary structure, part of the 50S ribosomal subunit. Contacts protein L29, and trigger factor when it is bound to the ribosome.

In terms of biological role, one of the early assembly proteins it binds 23S rRNA. One of the proteins that surrounds the polypeptide exit tunnel on the outside of the ribosome. Forms the main docking site for trigger factor binding to the ribosome. The protein is Large ribosomal subunit protein uL23 of Agathobacter rectalis (strain ATCC 33656 / DSM 3377 / JCM 17463 / KCTC 5835 / VPI 0990) (Eubacterium rectale).